Here is a 453-residue protein sequence, read N- to C-terminus: Midnolin-A (453 aa).

Residues 20 to 94 form the Ubiquitin-like domain; it reads MNLNIQSTTG…LTLLPSVEAG (75 aa). Disordered regions lie at residues 184 to 219, 232 to 256, 333 to 376, and 390 to 429; these read SHLA…TTSV, CAEQ…RSRK, RNAK…ENRA, and QKRL…EGSL. The segment covering 206–219 has biased composition (polar residues); that stretch reads HCNGPHSSPLTTSV. Low complexity-rich tracts occupy residues 239 to 252 and 338 to 351; these read STRG…SPSS and TSPQ…TTHP. Residues 365-376 are compositionally biased toward basic and acidic residues; that stretch reads SGDRLRQTENRA. Residues 390–399 show a composition bias toward basic residues; sequence QKRLRRKARR. Low complexity predominate over residues 415 to 428; it reads RTSSNSSTSSGEGS.

The protein resides in the nucleus. The protein localises to the cytoplasm. It localises to the cytosol. Its subcellular location is the nucleolus. Facilitates ubiquitin-independent proteasomal degradation of polycomb protein CBX4. Plays a role in inhibiting the activity of glucokinase GCK and both glucose-induced and basal insulin secretion. This is Midnolin-A (midn-a) from Xenopus laevis (African clawed frog).